The chain runs to 637 residues: Type II restriction enzyme and methyltransferase RM.BcgI (637 aa).

The protein in the C-terminal section; belongs to the N(4)/N(6)-methyltransferase family. Heterotrimer of two A and one B subunit. Both subunits are necessary for DNA-binding, which is sequence non-specific. It depends on Mg(2+) as a cofactor.

The enzyme catalyses Endonucleolytic cleavage of DNA to give specific double-stranded fragments with terminal 5'-phosphates.. The catalysed reaction is a 2'-deoxyadenosine in DNA + S-adenosyl-L-methionine = an N(6)-methyl-2'-deoxyadenosine in DNA + S-adenosyl-L-homocysteine + H(+). Its activity is regulated as follows. DNA restriction requires S-adenosyl-L-methionine and Mg(2+), and is inhibited by S-adenosyl-homocysteine. SAM may be a cofactor for DNA restriction. Functionally, a B, G, H and S subtype restriction enzyme that recognizes the double-stranded sequence 5'-CGAN(6)TGC-3' and cleaves bilaterally and symmetrically 10 base pairs upstream and 12 base pairs downstream of the sequence to release a 34-base pair fragment. Methylation of the recognition sequence occurs on the adenine in either one or both strands; seems to methylate restricted DNA. This subunit has no methylation or DNA restriction activity on its own. This Heyndrickxia coagulans (Weizmannia coagulans) protein is Type II restriction enzyme and methyltransferase RM.BcgI.